The chain runs to 154 residues: RNA-binding protein PAB1135 (154 aa).

Homodimer in solution.

Functionally, in vitro, binds efficiently double-stranded RNAs in a non-sequence specific manner. The polypeptide is RNA-binding protein PAB1135 (Pyrococcus abyssi (strain GE5 / Orsay)).